The following is a 431-amino-acid chain: Ornithine decarboxylase (431 aa).

Lys-94 is subject to N6-(pyridoxal phosphate)lysine. Residues Ser-226, Gly-264, and 297-300 (EPGR) contribute to the pyridoxal 5'-phosphate site. Substrate is bound at residue 340-341 (YD). Cys-376 functions as the Proton donor; shared with dimeric partner in the catalytic mechanism. Residue Asp-377 coordinates substrate. Tyr-405 is a binding site for pyridoxal 5'-phosphate.

It belongs to the Orn/Lys/Arg decarboxylase class-II family. Homodimer. Only the dimer is catalytically active, as the active sites are constructed of residues from both monomers. Requires pyridoxal 5'-phosphate as cofactor.

The enzyme catalyses L-ornithine + H(+) = putrescine + CO2. Its pathway is amine and polyamine biosynthesis; putrescine biosynthesis via L-ornithine pathway; putrescine from L-ornithine: step 1/1. With respect to regulation, inhibited by antizyme (AZ) in response to polyamine levels. AZ inhibits the assembly of the functional homodimer by binding to ODC monomers and targeting them for ubiquitin-independent proteolytic destruction by the 26S proteasome. Its function is as follows. Catalyzes the first and rate-limiting step of polyamine biosynthesis that converts ornithine into putrescine, which is the precursor for the polyamines, spermidine and spermine. Polyamines are essential for cell proliferation and are implicated in cellular processes, ranging from DNA replication to apoptosis. This is Ornithine decarboxylase from Datura stramonium (Jimsonweed).